Reading from the N-terminus, the 1218-residue chain is Structural maintenance of chromosomes protein 2 (1218 aa).

32 to 39 (GLNGSGKS) is a binding site for ATP. Residues 209 to 517 (VKLKKEKEEY…INSVKIDYKI (309 aa)) adopt a coiled-coil conformation. Residues 525-654 (DVLGQIYKLI…CSNVDLCKKI (130 aa)) enclose the SMC hinge domain. 2 coiled-coil regions span residues 693-949 (LNYE…DTVK) and 978-1045 (RHDV…KKSE).

It belongs to the SMC family. SMC2 subfamily.

The protein resides in the nucleus. May play a role in the conversion of interphase chromatin into condensed chromosomes. In Plasmodium falciparum (isolate 3D7), this protein is Structural maintenance of chromosomes protein 2.